A 75-amino-acid polypeptide reads, in one-letter code: UPF0154 protein SERP0914 (75 aa).

A helical membrane pass occupies residues 3–23; sequence IWVAIILIVIALIAGLIGGFL.

This sequence belongs to the UPF0154 family.

The protein localises to the membrane. This chain is UPF0154 protein SERP0914, found in Staphylococcus epidermidis (strain ATCC 35984 / DSM 28319 / BCRC 17069 / CCUG 31568 / BM 3577 / RP62A).